A 296-amino-acid chain; its full sequence is MEETTPPLQAGSKPHLEKLTLGVTRILESSPGVTEVSIIEKLPAERHVISSWEQKNNCVMPEDVRNFYLMTNGFHMTWSVKLDEHIIPLGSMVINGISKLTQLIQSSVYSLPNAPTLADLEDDTQEGNEDHQLEKPHFDCRSAIFELDSCNGNGKVCLVYKNGKPGLAHDTEIWFLDRALYWHFLTDTFIAYYRLLITHLGLPQWQYAFTSYGISPQAKQWFSMYKPITYNTSLLTEESDNFANKLDPSKVFKSKNKILIPKKKGPVPPASGQKGPGPLPPPTSKPTTGSGNPVRK.

Basic residues predominate over residues 254 to 265; it reads SKNKILIPKKKG. The disordered stretch occupies residues 254–296; it reads SKNKILIPKKKGPVPPASGQKGPGPLPPPTSKPTTGSGNPVRK. Low complexity predominate over residues 285 to 296; that stretch reads KPTTGSGNPVRK.

In terms of assembly, part of the neuronal tubulin polyglutamylase complex which contains TPGS1, TPGS2, TTLL1, LRRC49 and NICN1. Interacts with CSTPP1 and LRRC49.

Its subcellular location is the cytoplasm. The protein resides in the cytoskeleton. It is found in the microtubule organizing center. It localises to the centrosome. The protein localises to the centriolar satellite. Subunit of the tubulin polyglutamylase complex (TPGC). The complex mediates cilia and flagella polyglutamylation which is essential for their biogenesis and motility. This is Tubulin polyglutamylase complex subunit 2 (Tpgs2) from Mus musculus (Mouse).